Here is a 472-residue protein sequence, read N- to C-terminus: Poly(A) polymerase catalytic subunit (472 aa).

Active-site residues include Asp194 and Asp196.

It belongs to the poxviridae poly(A) polymerase catalytic subunit family. As to quaternary structure, heterodimer of a large (catalytic) subunit and a small (regulatory) subunit.

It catalyses the reaction RNA(n) + ATP = RNA(n)-3'-adenine ribonucleotide + diphosphate. Polymerase that creates the 3'-poly(A) tail of mRNA's. This chain is Poly(A) polymerase catalytic subunit (PAPL), found in Fowlpox virus (strain NVSL) (FPV).